The chain runs to 792 residues: Kinesin-like protein KIF3C (792 aa).

Positions 10–363 constitute a Kinesin motor domain; it reads ALKVVARCRP…LRFANRAKNI (354 aa). 97–104 contacts ATP; that stretch reads GQTGTGKT. Disordered regions lie at residues 249-287, 397-418, and 749-792; these read GSER…RPKE, MLGK…APAG, and RPST…LDHE. Positions 257–268 are enriched in low complexity; sequence GPNTTGGTATQP. Residues 269 to 282 are compositionally biased toward gly residues; that stretch reads TGGGGGGGGGGGGG. Residues 374–627 adopt a coiled-coil conformation; it reads KDTLLREFQE…QNEQTRELKL (254 aa). Over residues 397–412 the composition is skewed to basic residues; it reads MLGKRLRRKSSRRKKA. The tract at residues 628–792 is globular; it reads KYLIIENFIP…LRPTTVLDHE (165 aa). Over residues 773–792 the composition is skewed to low complexity; sequence AHASLAASAALRPTTVLDHE.

This sequence belongs to the TRAFAC class myosin-kinesin ATPase superfamily. Kinesin family. Kinesin II subfamily. In terms of assembly, heterodimer of KIF3A and KIF3C.

Its subcellular location is the cytoplasm. It is found in the cytoskeleton. Functionally, microtubule-based anterograde translocator for membranous organelles. In Bos taurus (Bovine), this protein is Kinesin-like protein KIF3C (KIF3C).